The chain runs to 508 residues: Drug efflux pump JefA (508 aa).

The next 14 helical transmembrane spans lie at 9 to 29, 46 to 66, 75 to 95, 104 to 124, 136 to 156, 163 to 183, 194 to 214, 222 to 242, 265 to 285, 297 to 317, 328 to 348, 354 to 374, 399 to 419, and 479 to 499; these read VLATGLGIFMVFVDVNIVNVA, WAVAGYSLGMAAVLMSCALLG, FVFGVTLFVVSSIVCVLPVSL, IQGLGAAFISVLSLALLSHSF, NWMAIGMVGAASAPALGGLMV, SVFLVNVPLGAIVWLLTLVGV, LDWVGQLTLIPAVALIAYTII, QSAGFVAALLLAAGVLLWLFV, SVLIVYFVVMSCFFGTLMVIT, LHAGLMMLPVPAGFGVASLLA, LPVLTCLAAMFIGLAIFAISM, VALVGLTIFGAGAGGCATPLL, LGGIFGVAFLGTIVAAWLGAA, and GIKLALGGAAVLLTGAFVLGW.

Belongs to the major facilitator superfamily.

The protein localises to the cell inner membrane. Its function is as follows. Involved in resistance to ethambutol and isoniazid. This Mycobacterium tuberculosis (strain CDC 1551 / Oshkosh) protein is Drug efflux pump JefA.